We begin with the raw amino-acid sequence, 282 residues long: MDNSSTGRYPAASLPPAYLRPGSSSFTDFLRAQAPELLPTARSFPEGSVVQAAHGTTIVALTFKGGVVIAGDRRATMGNVIAQRDMKKVFVTDDYSAVGIAGTAGIAIEIVRLFAVELRHYEKIEGVSLSLDGKANRLSGMVKGNLDAALAGLAVVPLFVGYDTDAADPDRAGRIVSYDVTGARFEETLGYQSVGSGSLFAKSALKKLYDPDADAEGAVRAAVEALYDAADDDSATGGPDLVRRIFPVVVTVTAEGAVHLPEERTSAIAETVVEGRRARPAG.

Positions 1–55 are cleaved as a propeptide — removed in mature form; by autocatalysis; sequence MDNSSTGRYPAASLPPAYLRPGSSSFTDFLRAQAPELLPTARSFPEGSVVQAAHG. The Nucleophile role is filled by T56.

This sequence belongs to the peptidase T1B family. As to quaternary structure, the 20S proteasome core is composed of 14 alpha and 14 beta subunits that assemble into four stacked heptameric rings, resulting in a barrel-shaped structure. The two inner rings, each composed of seven catalytic beta subunits, are sandwiched by two outer rings, each composed of seven alpha subunits. The catalytic chamber with the active sites is on the inside of the barrel. Has a gated structure, the ends of the cylinder being occluded by the N-termini of the alpha-subunits. Is capped by the proteasome-associated ATPase, ARC.

It localises to the cytoplasm. The catalysed reaction is Cleavage of peptide bonds with very broad specificity.. It functions in the pathway protein degradation; proteasomal Pup-dependent pathway. The formation of the proteasomal ATPase ARC-20S proteasome complex, likely via the docking of the C-termini of ARC into the intersubunit pockets in the alpha-rings, may trigger opening of the gate for substrate entry. Interconversion between the open-gate and close-gate conformations leads to a dynamic regulation of the 20S proteasome proteolysis activity. In terms of biological role, component of the proteasome core, a large protease complex with broad specificity involved in protein degradation. In Actinosynnema mirum (strain ATCC 29888 / DSM 43827 / JCM 3225 / NBRC 14064 / NCIMB 13271 / NRRL B-12336 / IMRU 3971 / 101), this protein is Proteasome subunit beta.